The primary structure comprises 388 residues: Flap endonuclease 1 (388 aa).

An N-domain region spans residues 1–104 (MGILGLSKLI…GELAKRAERR (104 aa)). Mg(2+) is bound at residue Asp34. Positions 47 and 70 each coordinate DNA. Residues Asp86, Glu158, Glu160, Asp179, and Asp181 each coordinate Mg(2+). An I-domain region spans residues 122-253 (EIEKFNRRLV…KRAIELINNY (132 aa)). Glu158 is a binding site for DNA. Gly231 and Asp233 together coordinate DNA. Asp233 contacts Mg(2+). An interaction with PCNA region spans residues 336–344 (TQVRLDSFF). Residues 343–388 (FFKTLPSTPSATNAAKRKAEEAKKSANNKKAKTSGGGGGGRGRRPK) are disordered.

The protein belongs to the XPG/RAD2 endonuclease family. FEN1 subfamily. As to quaternary structure, interacts with PCNA. Three molecules of FEN1 bind to one PCNA trimer with each molecule binding to one PCNA monomer. PCNA stimulates the nuclease activity without altering cleavage specificity. Mg(2+) serves as cofactor. In terms of processing, phosphorylated. Phosphorylation upon DNA damage induces relocalization to the nuclear plasma.

Its subcellular location is the nucleus. It is found in the nucleolus. It localises to the nucleoplasm. The protein resides in the mitochondrion. Its function is as follows. Structure-specific nuclease with 5'-flap endonuclease and 5'-3' exonuclease activities involved in DNA replication and repair. During DNA replication, cleaves the 5'-overhanging flap structure that is generated by displacement synthesis when DNA polymerase encounters the 5'-end of a downstream Okazaki fragment. It enters the flap from the 5'-end and then tracks to cleave the flap base, leaving a nick for ligation. Also involved in the long patch base excision repair (LP-BER) pathway, by cleaving within the apurinic/apyrimidinic (AP) site-terminated flap. Acts as a genome stabilization factor that prevents flaps from equilibrating into structures that lead to duplications and deletions. Also possesses 5'-3' exonuclease activity on nicked or gapped double-stranded DNA, and exhibits RNase H activity. Also involved in replication and repair of rDNA and in repairing mitochondrial DNA. The sequence is that of Flap endonuclease 1 from Drosophila ananassae (Fruit fly).